The sequence spans 354 residues: Protein RecA (354 aa).

75 to 82 (GPESSGKT) contacts ATP.

It belongs to the RecA family.

It localises to the cytoplasm. In terms of biological role, can catalyze the hydrolysis of ATP in the presence of single-stranded DNA, the ATP-dependent uptake of single-stranded DNA by duplex DNA, and the ATP-dependent hybridization of homologous single-stranded DNAs. It interacts with LexA causing its activation and leading to its autocatalytic cleavage. This Cupriavidus taiwanensis (strain DSM 17343 / BCRC 17206 / CCUG 44338 / CIP 107171 / LMG 19424 / R1) (Ralstonia taiwanensis (strain LMG 19424)) protein is Protein RecA.